The following is a 369-amino-acid chain: MNNNYYVGLMSGTSMDGVDAVLVSFDGDQPSLIASHTEELPKALLSSLQKLCLPGNDEINRLGHLDRSMGKLFAKAVNALLETANIDKSQVIAIGSHGQTVRHMPNLEMGFTLQIGDPNTIAVETGIDVIADFRRKDIALGGQGAPLVPAFHQHVFGSPNHKRIILNIGGIANVTYLPGNNEDVTGFDTGPGNGLSDAWIQHQLSQPYDKDGAWAKSGTTDQKMLQHLLSHPYFALAAPKSTGRELFNQAWAEQQLSEFGHLSEADIQSTLLDLTCYSIANDALKLSENGELYVCGGGAYNSELMHRLHKLLPNYKVVTTSELGMDPQWVEGIAFAWLAMRYHQGLPGNLPAVTGASREAILGSFYPAD.

12–19 lines the ATP pocket; the sequence is GTSMDGVD.

Belongs to the anhydro-N-acetylmuramic acid kinase family.

The enzyme catalyses 1,6-anhydro-N-acetyl-beta-muramate + ATP + H2O = N-acetyl-D-muramate 6-phosphate + ADP + H(+). The protein operates within amino-sugar metabolism; 1,6-anhydro-N-acetylmuramate degradation. It participates in cell wall biogenesis; peptidoglycan recycling. Catalyzes the specific phosphorylation of 1,6-anhydro-N-acetylmuramic acid (anhMurNAc) with the simultaneous cleavage of the 1,6-anhydro ring, generating MurNAc-6-P. Is required for the utilization of anhMurNAc either imported from the medium or derived from its own cell wall murein, and thus plays a role in cell wall recycling. The protein is Anhydro-N-acetylmuramic acid kinase of Shewanella pealeana (strain ATCC 700345 / ANG-SQ1).